Reading from the N-terminus, the 287-residue chain is MWLPALVLATLAASAAWAGHLSSPPLVDTLHGKVLGKFVSLEGFAQPVAVFLGIPFAKPPLGPLRFTLPQPAEPWNFVKNATSYPPMFTQDPKAGQLISELFTNRKENIPLKLSEDCLYLNIYTPADLTKKNRLPVMVWIHGGGLMVGAASTYDGLALAAHENVVVVTIQYRLGIWGFFSTGDEHSPGNWGHLDQLAALHWVQDNIASFGGNPGSVTIFGGSVGGESVSVLVLSPLAKNLFHRAISESGVALTSVLVKKGDVKPLAEVGLRLVRLRLDTPTSLALCS.

A signal peptide spans 1-18 (MWLPALVLATLAASAAWA). The N-linked (GlcNAc...) asparagine glycan is linked to Asn-80.

It belongs to the type-B carboxylesterase/lipase family. Expressed in placenta.

The protein resides in the secreted. Has no esterase activity. The chain is Putative inactive carboxylesterase 4 (CES1P1) from Homo sapiens (Human).